We begin with the raw amino-acid sequence, 465 residues long: Cysteine--tRNA ligase (465 aa).

Position 30 (Cys-30) interacts with Zn(2+). Residues 32–42 (ITVYDYCHVGH) carry the 'HIGH' region motif. Zn(2+)-binding residues include Cys-214, His-239, and Glu-243. The 'KMSKS' region motif lies at 271–275 (KMSKS). Lys-274 lines the ATP pocket.

It belongs to the class-I aminoacyl-tRNA synthetase family. As to quaternary structure, monomer. The cofactor is Zn(2+).

It localises to the cytoplasm. It carries out the reaction tRNA(Cys) + L-cysteine + ATP = L-cysteinyl-tRNA(Cys) + AMP + diphosphate. This Burkholderia orbicola (strain MC0-3) protein is Cysteine--tRNA ligase.